Here is a 345-residue protein sequence, read N- to C-terminus: Platelet-derived growth factor C (345 aa).

The N-terminal stretch at 1 to 22 (MLLLGLLLLTSALAGRRHGAAA) is a signal peptide. One can recognise a CUB domain in the interval 46 to 163 (HEKIITVTSN…PGFCIHYTLL (118 aa)). A glycan (N-linked (GlcNAc...) asparagine) is linked at asparagine 55. Intrachain disulfides connect cysteine 104-cysteine 124, cysteine 250-cysteine 294, cysteine 280-cysteine 335, and cysteine 287-cysteine 337.

Belongs to the PDGF/VEGF growth factor family. Homodimer; disulfide-linked. Interacts with PDGFRA homodimers, and with heterodimers formed by PDGFRA and PDGFRB. Proteolytic removal of the N-terminal CUB domain releasing the core domain is necessary for unmasking the receptor-binding epitopes of the core domain. Cleavage after basic residues in the hinge region (region connecting the CUB and growth factor domains) gives rise to the receptor-binding form.

Its subcellular location is the secreted. Its function is as follows. Growth factor that plays an essential role in the regulation of embryonic development, cell proliferation, cell migration, survival and chemotaxis. Potent mitogen and chemoattractant for cells of mesenchymal origin. Required for normal skeleton formation during embryonic development. Required for normal skin morphogenesis during embryonic development. Plays an important role in wound healing, in angiogenesis and blood vessel development. This Gallus gallus (Chicken) protein is Platelet-derived growth factor C (PDGFC).